The primary structure comprises 203 residues: Small ribosomal subunit protein uS4c (203 aa).

The tract at residues 18 to 42 (LPGLTSKRPKNRKDSMNMNRSSSRK) is disordered. The segment covering 33-42 (MNMNRSSSRK) has biased composition (polar residues). Residues 91–152 (MRLDNIIFRL…QPRLRAIIKK (62 aa)) form the S4 RNA-binding domain.

The protein belongs to the universal ribosomal protein uS4 family. As to quaternary structure, part of the 30S ribosomal subunit. Contacts protein S5. The interaction surface between S4 and S5 is involved in control of translational fidelity.

It localises to the plastid. The protein resides in the chloroplast. One of the primary rRNA binding proteins, it binds directly to 16S rRNA where it nucleates assembly of the body of the 30S subunit. Functionally, with S5 and S12 plays an important role in translational accuracy. In Pinus koraiensis (Korean pine), this protein is Small ribosomal subunit protein uS4c (rps4).